The chain runs to 194 residues: Peroxynitrite isomerase 1 (194 aa).

Positions 40–46 match the GXWXGXG motif; that stretch reads GVWRGEG. Residues K157 and H184 each contribute to the heme b site.

The protein belongs to the nitrobindin family. Homodimer. Heme b serves as cofactor.

It catalyses the reaction peroxynitrite = nitrate. The protein operates within nitrogen metabolism. Functionally, heme-binding protein able to scavenge peroxynitrite and to protect free L-tyrosine against peroxynitrite-mediated nitration, by acting as a peroxynitrite isomerase that converts peroxynitrite to nitrate. Therefore, this protein likely plays a role in peroxynitrite sensing and in the detoxification of reactive nitrogen and oxygen species (RNS and ROS, respectively). Is able to bind nitric oxide (NO) in vitro, but may act as a sensor of peroxynitrite levels in vivo. This is Peroxynitrite isomerase 1 from Mycobacterium ulcerans (strain Agy99).